Consider the following 224-residue polypeptide: Flagellar L-ring protein (224 aa).

Positions 1–15 are cleaved as a signal peptide; the sequence is MARYFILAAALLLTA. A lipid anchor (N-palmitoyl cysteine) is attached at Cys-16. Residue Cys-16 is the site of S-diacylglycerol cysteine attachment.

Belongs to the FlgH family. As to quaternary structure, the basal body constitutes a major portion of the flagellar organelle and consists of four rings (L,P,S, and M) mounted on a central rod.

It is found in the cell outer membrane. The protein localises to the bacterial flagellum basal body. Its function is as follows. Assembles around the rod to form the L-ring and probably protects the motor/basal body from shearing forces during rotation. The sequence is that of Flagellar L-ring protein from Shewanella sp. (strain MR-4).